A 1096-amino-acid polypeptide reads, in one-letter code: Carbamoyl phosphate synthase large chain (1096 aa).

The carboxyphosphate synthetic domain stretch occupies residues 1 to 402 (MPKRDDINSV…ALQKALRSLE (402 aa)). Residues Arg129, Arg169, Gly175, Gly176, Glu208, Ile210, Glu215, Gly241, Val242, His243, Gln285, and Glu299 each coordinate ATP. The ATP-grasp 1 domain occupies 133–328 (KDLVIESGAD…IAKIAAKLAI (196 aa)). 3 residues coordinate Mg(2+): Gln285, Glu299, and Asn301. Mn(2+) contacts are provided by Gln285, Glu299, and Asn301. The segment at 403-547 (KRGSSFHWGP…YSSYDSETEI (145 aa)) is oligomerization domain. Positions 548–950 (VPSDRRKVII…AFAKSQEAAF (403 aa)) are carbamoyl phosphate synthetic domain. The region spanning 676–870 (SGILDTAGLV…LAKAASLVMV (195 aa)) is the ATP-grasp 2 domain. Positions 712, 754, 756, 761, 786, 787, 788, 789, 829, and 841 each coordinate ATP. Residues Gln829, Glu841, and Asn843 each contribute to the Mg(2+) site. The Mn(2+) site is built by Gln829, Glu841, and Asn843. Residues 951–1095 (GGLPLSGTVF…QDYAIAREAR (145 aa)) form the MGS-like domain. Residues 951-1096 (GGLPLSGTVF…DYAIAREARR (146 aa)) form an allosteric domain region.

This sequence belongs to the CarB family. As to quaternary structure, composed of two chains; the small (or glutamine) chain promotes the hydrolysis of glutamine to ammonia, which is used by the large (or ammonia) chain to synthesize carbamoyl phosphate. Tetramer of heterodimers (alpha,beta)4. It depends on Mg(2+) as a cofactor. Requires Mn(2+) as cofactor.

The enzyme catalyses hydrogencarbonate + L-glutamine + 2 ATP + H2O = carbamoyl phosphate + L-glutamate + 2 ADP + phosphate + 2 H(+). It catalyses the reaction hydrogencarbonate + NH4(+) + 2 ATP = carbamoyl phosphate + 2 ADP + phosphate + 2 H(+). The protein operates within amino-acid biosynthesis; L-arginine biosynthesis; carbamoyl phosphate from bicarbonate: step 1/1. Its pathway is pyrimidine metabolism; UMP biosynthesis via de novo pathway; (S)-dihydroorotate from bicarbonate: step 1/3. In terms of biological role, large subunit of the glutamine-dependent carbamoyl phosphate synthetase (CPSase). CPSase catalyzes the formation of carbamoyl phosphate from the ammonia moiety of glutamine, carbonate, and phosphate donated by ATP, constituting the first step of 2 biosynthetic pathways, one leading to arginine and/or urea and the other to pyrimidine nucleotides. The large subunit (synthetase) binds the substrates ammonia (free or transferred from glutamine from the small subunit), hydrogencarbonate and ATP and carries out an ATP-coupled ligase reaction, activating hydrogencarbonate by forming carboxy phosphate which reacts with ammonia to form carbamoyl phosphate. This Clavibacter michiganensis subsp. michiganensis (strain NCPPB 382) protein is Carbamoyl phosphate synthase large chain.